Here is a 173-residue protein sequence, read N- to C-terminus: Cell division protein SepF (173 aa).

Residues 31–82 (FEDFDEPLDERPSRNRSPRDDSRNNAVTDSSDHSPSRNERRSPAPAPATADL) form a disordered region. Composition is skewed to basic and acidic residues over residues 39–53 (DERP…DDSR) and 60–72 (SSDH…ERRS).

It belongs to the SepF family. As to quaternary structure, homodimer. Interacts with FtsZ.

It localises to the cytoplasm. Functionally, cell division protein that is part of the divisome complex and is recruited early to the Z-ring. Probably stimulates Z-ring formation, perhaps through the cross-linking of FtsZ protofilaments. Its function overlaps with FtsA. In Thermobifida fusca (strain YX), this protein is Cell division protein SepF.